Consider the following 511-residue polypeptide: 2-isopropylmalate synthase (511 aa).

The region spanning 5–267 (IQIFDTTLRD…ESQINLEETK (263 aa)) is the Pyruvate carboxyltransferase domain. 4 residues coordinate Mn(2+): Asp14, His202, His204, and Asn238. Residues 391 to 511 (QLDNLQLQYV…EYELKEGIRT (121 aa)) form a regulatory domain region.

Belongs to the alpha-IPM synthase/homocitrate synthase family. LeuA type 1 subfamily. As to quaternary structure, homodimer. Mn(2+) serves as cofactor.

The protein resides in the cytoplasm. The catalysed reaction is 3-methyl-2-oxobutanoate + acetyl-CoA + H2O = (2S)-2-isopropylmalate + CoA + H(+). It participates in amino-acid biosynthesis; L-leucine biosynthesis; L-leucine from 3-methyl-2-oxobutanoate: step 1/4. In terms of biological role, catalyzes the condensation of the acetyl group of acetyl-CoA with 3-methyl-2-oxobutanoate (2-ketoisovalerate) to form 3-carboxy-3-hydroxy-4-methylpentanoate (2-isopropylmalate). This chain is 2-isopropylmalate synthase, found in Staphylococcus epidermidis (strain ATCC 35984 / DSM 28319 / BCRC 17069 / CCUG 31568 / BM 3577 / RP62A).